The following is a 429-amino-acid chain: Forkhead box protein A1-A (429 aa).

A DNA-binding region (fork-head) is located at residues 159–253; that stretch reads KPPYSYISLI…ENGCYLRRQK (95 aa). A compositionally biased stretch (basic and acidic residues) spans 258-274; it reads EKTQGGKGNQDGRKDHS. The tract at residues 258–341 is disordered; that stretch reads EKTQGGKGNQ…HSTHSLAHES (84 aa). The span at 287–304 shows a compositional bias: low complexity; that stretch reads SSQMDSSSSMSNPSSSPQ. Positions 325-336 are enriched in polar residues; the sequence is PLSSHQNHSTHS.

As to expression, at neurula stage, expressed in the notochord but not in the neural floor plate. During tailbud stages, expressed in the neural floor plate. At stage 35, expressed in the rhombencephalon, mesencephalon, pharyngeal pouches, foregut and pronephros. At stage 44, expressed in a region of the gut on the right hand side of the embryo. Expressed in the adult lung and liver.

Its subcellular location is the nucleus. Functionally, probable transcription factor. In Xenopus laevis (African clawed frog), this protein is Forkhead box protein A1-A (foxa1-a).